Reading from the N-terminus, the 246-residue chain is MLTMSTLVSNPLFELSEVSVGQHFYWNLGGNEVHGQVLLVSWFVLAVIIGFGLTANSNLKPTPDGLQNLSEYVTEFIRDLAKTQIGEEDYLSWVPFLGTIFLFVFVSNWSGALVPWALIELPSGELAAPTNDINTTVALALLTSIAYFYAGINKKGLGYFKRYVEPAAFLLPINVLEDFTKPLSLSFRLFGNILADELVTGVLVALVPLVIPIPLMLLGLFTSAIQALVFSTLAGAYIGESLEDHH.

A run of 5 helical transmembrane segments spans residues 33-53, 99-119, 133-153, 201-221, and 222-242; these read VHGQ…GFGL, TIFL…WALI, INTT…AGIN, GVLV…LGLF, and TSAI…GESL.

It belongs to the ATPase A chain family. In terms of assembly, F-type ATPases have 2 components, CF(1) - the catalytic core - and CF(0) - the membrane proton channel. CF(1) has five subunits: alpha(3), beta(3), gamma(1), delta(1), epsilon(1). CF(0) has four main subunits: a, b, b' and c.

It localises to the plastid. The protein localises to the chloroplast thylakoid membrane. Its function is as follows. Key component of the proton channel; it plays a direct role in the translocation of protons across the membrane. This is ATP synthase subunit a, chloroplastic from Oltmannsiellopsis viridis (Marine flagellate).